Consider the following 327-residue polypeptide: Serum response factor homolog (327 aa).

The tract at residues glutamine 12–lysine 43 is disordered. The segment covering threonine 25–threonine 35 has biased composition (low complexity). One can recognise an MADS-box domain in the interval lysine 45–lysine 105. Positions threonine 189–lysine 225 are disordered. Acidic residues predominate over residues glycine 191–serine 210.

Expressed in muscle, varying with age, decreasing twofold during the first week of adulthood.

It localises to the nucleus. Transcription factor. Regulates myogenesis, in cooperation with transcription factors hlh-1 and hnd-1. Required for maintenance of muscle in adulthood. This Caenorhabditis elegans protein is Serum response factor homolog.